A 219-amino-acid polypeptide reads, in one-letter code: RPA-interacting protein (219 aa).

Ser-18 carries the post-translational modification Phosphoserine. The RIP-type zinc-finger motif lies at 137–212; it reads CPVCIKYNLR…PSLLMNCLTC (76 aa). The segment at 164-180 is mediates nuclear export; that stretch reads STDLTEQKLRACLEENV.

As to quaternary structure, interacts with the RPA1 subunit of RPA complex. In terms of processing, sumoylated; required for localization in the nuclear PML body and transport of RPA complex in PML body. Upon UV irradiation and during S phase, it is desumoylated, releasing RPA complex that is translocated to sites of DNA damage. Sumoylation takes place at different Lys residues.

The protein localises to the nucleus. Its function is as follows. Mediates the import of RPA complex into the nucleus, possibly via some interaction with importin beta. Sumoylation mediates the localization of RPA complex into the PML body of the nucleus, thereby participating in RPA function in DNA metabolism. The sequence is that of RPA-interacting protein (Rpain) from Mus musculus (Mouse).